A 360-amino-acid chain; its full sequence is Photosystem II protein D1 (360 aa).

3 helical membrane-spanning segments follow: residues 30-47 (YVGWFGVLMIPCLLAAAA), 119-134 (HFLIGISAYMGRQWEL), and 143-157 (WICVAYSAPVSAAFA). His119 contributes to the chlorophyll a binding site. Tyr127 contributes to the pheophytin a binding site. [CaMn4O5] cluster contacts are provided by Asp171 and Glu190. A helical membrane pass occupies residues 198-219 (FHMAGVAGMFGGSLFSAMHGSL). Residue His199 participates in chlorophyll a binding. A quinone-binding positions include His216 and 265–266 (SF). His216 serves as a coordination point for Fe cation. His273 lines the Fe cation pocket. The helical transmembrane segment at 275 to 289 (FLAVFPVVCVWLTSM) threads the bilayer. [CaMn4O5] cluster contacts are provided by His333, Glu334, Asp343, and Ala345. The propeptide occupies 346 to 360 (AAESTTVALTAPAIG).

It belongs to the reaction center PufL/M/PsbA/D family. In terms of assembly, PSII is composed of 1 copy each of membrane proteins PsbA, PsbB, PsbC, PsbD, PsbE, PsbF, PsbH, PsbI, PsbJ, PsbK, PsbL, PsbM, PsbT, PsbX, PsbY, Psb30/Ycf12, peripheral proteins PsbO, CyanoQ (PsbQ), PsbU, PsbV and a large number of cofactors. It forms dimeric complexes. The D1/D2 heterodimer binds P680, chlorophylls that are the primary electron donor of PSII, and subsequent electron acceptors. It shares a non-heme iron and each subunit binds pheophytin, quinone, additional chlorophylls, carotenoids and lipids. D1 provides most of the ligands for the Mn4-Ca-O5 cluster of the oxygen-evolving complex (OEC). There is also a Cl(-1) ion associated with D1 and D2, which is required for oxygen evolution. The PSII complex binds additional chlorophylls, carotenoids and specific lipids. is required as a cofactor. In terms of processing, tyr-162 forms a radical intermediate that is referred to as redox-active TyrZ, YZ or Y-Z. C-terminally processed by CtpA; processing is essential to allow assembly of the oxygen-evolving complex and thus photosynthetic growth.

The protein resides in the cellular thylakoid membrane. The enzyme catalyses 2 a plastoquinone + 4 hnu + 2 H2O = 2 a plastoquinol + O2. Functionally, photosystem II (PSII) is a light-driven water:plastoquinone oxidoreductase that uses light energy to abstract electrons from H(2)O, generating O(2) and a proton gradient subsequently used for ATP formation. It consists of a core antenna complex that captures photons, and an electron transfer chain that converts photonic excitation into a charge separation. The D1/D2 (PsbA/PsbD) reaction center heterodimer binds P680, the primary electron donor of PSII as well as several subsequent electron acceptors. This Prochlorococcus marinus (strain MIT 9515) protein is Photosystem II protein D1.